A 411-amino-acid polypeptide reads, in one-letter code: Stearoyl-[acyl-carrier-protein] 9-desaturase 2, chloroplastic (411 aa).

Residues 1 to 44 (MALLLNSTITVAMKQNPLVAVSFPRTTCLGSSFSPPRLLRVSCV) constitute a chloroplast transit peptide. 6 residues coordinate Fe cation: Glu-148, Glu-186, His-189, Glu-239, Glu-272, and His-275.

The protein belongs to the fatty acid desaturase type 2 family. As to quaternary structure, homodimer. Requires Fe(2+) as cofactor. In terms of tissue distribution, preferentially expressed in roots and flowers.

The protein localises to the plastid. The protein resides in the chloroplast. It carries out the reaction octadecanoyl-[ACP] + 2 reduced [2Fe-2S]-[ferredoxin] + O2 + 2 H(+) = (9Z)-octadecenoyl-[ACP] + 2 oxidized [2Fe-2S]-[ferredoxin] + 2 H2O. Its pathway is lipid metabolism; fatty acid metabolism. Its function is as follows. Converts stearoyl-ACP to oleoyl-ACP by introduction of a cis double bond between carbons 9 and 10 of the acyl chain. Exhibits delta-9 palmitoyl-[acyl-carrier-protein] desaturase (PAD) activity. Involved in omega-7 monounsaturated fatty acid biosynthesis, especially in the endosperm oil. This is Stearoyl-[acyl-carrier-protein] 9-desaturase 2, chloroplastic (S-ACP-DES2) from Arabidopsis thaliana (Mouse-ear cress).